The sequence spans 697 residues: Elongation factor G 2 (697 aa).

One can recognise a tr-type G domain in the interval 5–280 (SKYRNIGIFA…AVVDYLPAPN (276 aa)). Residues 14-21 (AHVDAGKT), 78-82 (DTPGH), and 132-135 (NKLD) contribute to the GTP site.

This sequence belongs to the TRAFAC class translation factor GTPase superfamily. Classic translation factor GTPase family. EF-G/EF-2 subfamily.

It localises to the cytoplasm. Its function is as follows. Catalyzes the GTP-dependent ribosomal translocation step during translation elongation. During this step, the ribosome changes from the pre-translocational (PRE) to the post-translocational (POST) state as the newly formed A-site-bound peptidyl-tRNA and P-site-bound deacylated tRNA move to the P and E sites, respectively. Catalyzes the coordinated movement of the two tRNA molecules, the mRNA and conformational changes in the ribosome. This is Elongation factor G 2 from Shewanella sp. (strain MR-4).